Reading from the N-terminus, the 271-residue chain is Putative hydro-lyase OCAR_7359/OCA5_c07590 (271 aa).

This sequence belongs to the D-glutamate cyclase family.

In Afipia carboxidovorans (strain ATCC 49405 / DSM 1227 / KCTC 32145 / OM5) (Oligotropha carboxidovorans), this protein is Putative hydro-lyase OCAR_7359/OCA5_c07590.